We begin with the raw amino-acid sequence, 137 residues long: Ribosome-binding factor A (137 aa).

The protein belongs to the RbfA family. Monomer. Binds 30S ribosomal subunits, but not 50S ribosomal subunits or 70S ribosomes.

It localises to the cytoplasm. Its function is as follows. One of several proteins that assist in the late maturation steps of the functional core of the 30S ribosomal subunit. Associates with free 30S ribosomal subunits (but not with 30S subunits that are part of 70S ribosomes or polysomes). Required for efficient processing of 16S rRNA. May interact with the 5'-terminal helix region of 16S rRNA. This chain is Ribosome-binding factor A, found in Nitrobacter winogradskyi (strain ATCC 25391 / DSM 10237 / CIP 104748 / NCIMB 11846 / Nb-255).